Reading from the N-terminus, the 183-residue chain is Putative manganese efflux pump MntP (183 aa).

Helical transmembrane passes span 6-26 (LFLI…CIGL), 40-60 (IYFG…GFLF), 64-84 (IATM…IIMI), 101-121 (MNII…FTAL), 135-155 (LFIG…SKYL), and 158-178 (IDVI…FFGL).

It belongs to the MntP (TC 9.B.29) family.

The protein resides in the cell membrane. Functionally, probably functions as a manganese efflux pump. This is Putative manganese efflux pump MntP from Clostridium tetani (strain Massachusetts / E88).